The primary structure comprises 1149 residues: Potassium channel subfamily U member 1 (1149 aa).

Residues 1–24 (MFQTKLRNETWEDLPKMSCTTEIQ) lie on the Extracellular side of the membrane. A helical transmembrane segment spans residues 25-45 (AAFILSSFVTFFSGLIILLIF). Topologically, residues 46 to 101 (RLIWRSVKKWQIIKGTGIILELFTSGTIARSHVRSLHFQGQFRDHIEMLLSAQTFV) are cytoplasmic. The helical transmembrane segment at 102–122 (GQVLVILVFVLSIGSLIIYFI) threads the bilayer. Over 123-138 (NSADPVGSCSSYEDKT) the chain is Extracellular. A helical transmembrane segment spans residues 139–159 (IPIDLVFNAFFSFYFGLRFMA). Residues 160–163 (ADDK) lie on the Cytoplasmic side of the membrane. Residues 164-184 (IKFWLEMNSIVDIFTIPPTFI) traverse the membrane as a helical segment. At 185–188 (SYYL) the chain is on the extracellular side. Residues 189-209 (KSNWLGLRFLRALRLLELPQI) traverse the membrane as a helical; Voltage-sensor segment. Residues 210–226 (LQILRAIKTSNSVKFSK) lie on the Cytoplasmic side of the membrane. The chain crosses the membrane as a helical span at residues 227–247 (LLSIILSTWFTAAGFIHLVEN). At 248 to 259 (SGDPWLKGRNSQ) the chain is on the extracellular side. An intramembrane region (pore-forming) is located at residues 260-282 (NISYFESIYLVMATTSTVGFGDV). The short motif at 276–279 (TVGF) is the Selectivity for potassium element. Topologically, residues 283 to 291 (VAKTSLGRT) are extracellular. A helical membrane pass occupies residues 292–312 (FIMFFTLGSLILFANYIPEMV). The Cytoplasmic segment spans residues 313-1149 (ELFANKRKYT…EDPFAYSEPL (837 aa)). 2 consecutive RCK N-terminal domains span residues 331 to 473 (KKFI…DNII) and 713 to 884 (RNHI…EGSL). Disordered regions lie at residues 828–854 (QIDS…NEKS) and 1118–1149 (SQIP…SEPL). Positions 830-840 (DSSSDPSPSVS) are enriched in low complexity. A compositionally biased stretch (basic and acidic residues) spans 1125 to 1135 (NAKENERKTSD).

This sequence belongs to the potassium channel family. Calcium-activated (TC 1.A.1.3) subfamily. KCa5.1/KCNU1 sub-subfamily. Homotetramer; which constitutes the activated potassium channel. Interacts with LRRC52; this interaction changes channel gating properties, such as shifting gating to more negative potentials at a given pH. As to expression, testis-specific.

The protein resides in the cell membrane. The protein localises to the cell projection. It is found in the cilium. It localises to the flagellum membrane. It catalyses the reaction K(+)(in) = K(+)(out). Its activity is regulated as follows. Regulated by changes in cytosolic pH; activated by alkalization. Activated by intracellular Ca(2+). Despite strong sequence similarity, human KCNU1 channels are significantly more sensitive to activation by internal Ca(2+) and less pH-sensitive than mouse KCNU1. VU0546110 acts as a selective inhibitor. The auxiliary subunit LRRC52 shifts the activation of KCNU1 to more negative potentials at a given pH. In terms of biological role, testis-specific potassium channel activated by both intracellular pH and membrane voltage that mediates export of K(+). Represents the primary spermatozoan K(+) current. The channel underlies a pH-triggered membrane hyperpolarization during the process of sperm capacitation, as sperm encounter the alkaline environment near the ovum in the female reproductive tract, thereby playing an essential for male fertility. This Homo sapiens (Human) protein is Potassium channel subfamily U member 1.